Reading from the N-terminus, the 812-residue chain is Probable inorganic carbon transporter subunit DabA (812 aa).

Cysteine 337, aspartate 339, histidine 499, and cysteine 514 together coordinate Zn(2+).

It belongs to the inorganic carbon transporter (TC 9.A.2) DabA family. As to quaternary structure, forms a complex with DabB. It depends on Zn(2+) as a cofactor.

Its subcellular location is the cell inner membrane. Part of an energy-coupled inorganic carbon pump. The protein is Probable inorganic carbon transporter subunit DabA of Xanthomonas oryzae pv. oryzae (strain KACC10331 / KXO85).